The following is a 288-amino-acid chain: Bis(5'-nucleosyl)-tetraphosphatase, symmetrical (288 aa).

The protein belongs to the Ap4A hydrolase family.

The enzyme catalyses P(1),P(4)-bis(5'-adenosyl) tetraphosphate + H2O = 2 ADP + 2 H(+). Functionally, hydrolyzes diadenosine 5',5'''-P1,P4-tetraphosphate to yield ADP. This chain is Bis(5'-nucleosyl)-tetraphosphatase, symmetrical, found in Pseudomonas putida (strain W619).